We begin with the raw amino-acid sequence, 227 residues long: PKHD-type hydroxylase Mfla_2317 (227 aa).

In terms of domain architecture, Fe2OG dioxygenase spans 78–178 (KVFPPLFNRY…RVSSFFWMQS (101 aa)). Residues H96, D98, and H159 each contribute to the Fe cation site. Residue R169 participates in 2-oxoglutarate binding.

Fe(2+) is required as a cofactor. The cofactor is L-ascorbate.

In Methylobacillus flagellatus (strain ATCC 51484 / DSM 6875 / VKM B-1610 / KT), this protein is PKHD-type hydroxylase Mfla_2317.